A 110-amino-acid polypeptide reads, in one-letter code: NADH-quinone oxidoreductase subunit K (110 aa).

Transmembrane regions (helical) follow at residues 13-33, 41-61, and 73-93; these read LNHYLILSSLVFTIGMFGLFM, ILMSIELMLLAVNINFVAFSI, and IIILTVAAAETSIGLAILLIY.

It belongs to the complex I subunit 4L family. In terms of assembly, NDH-1 is composed of 14 different subunits. Subunits NuoA, H, J, K, L, M, N constitute the membrane sector of the complex.

It localises to the cell inner membrane. It catalyses the reaction a quinone + NADH + 5 H(+)(in) = a quinol + NAD(+) + 4 H(+)(out). Functionally, NDH-1 shuttles electrons from NADH, via FMN and iron-sulfur (Fe-S) centers, to quinones in the respiratory chain. The immediate electron acceptor for the enzyme in this species is believed to be ubiquinone. Couples the redox reaction to proton translocation (for every two electrons transferred, four hydrogen ions are translocated across the cytoplasmic membrane), and thus conserves the redox energy in a proton gradient. This chain is NADH-quinone oxidoreductase subunit K, found in Rickettsia conorii (strain ATCC VR-613 / Malish 7).